Consider the following 364-residue polypeptide: Peptide chain release factor 2 (364 aa).

Position 251 is an N5-methylglutamine (Q251).

It belongs to the prokaryotic/mitochondrial release factor family. Methylated by PrmC. Methylation increases the termination efficiency of RF2.

It localises to the cytoplasm. Its function is as follows. Peptide chain release factor 2 directs the termination of translation in response to the peptide chain termination codons UGA and UAA. This Campylobacter hominis (strain ATCC BAA-381 / DSM 21671 / CCUG 45161 / LMG 19568 / NCTC 13146 / CH001A) protein is Peptide chain release factor 2.